We begin with the raw amino-acid sequence, 404 residues long: MGITLPSHDRLPRAPCTPTSSARTMPETPHPRTILRGHKAQVHALAFVGNNDRLASGDAEGYVALWDLTIMRPTAVWQPHDNAILGIQGWGADRIITHGRDHKLAVWKLATSDEANLSKKLPLDDTSEPRPQPWLLHLIDVNTMNFCAFAACVPTDPPPAGDDPELLLAVPNTLASESIDIYHLPTQTRRHTVKSPGQNGMVMALALVPQGDSLTLLAGYENGVTTAMHLSAASGTWNTTYRTQPHSQPVLSLDVSPDGLSFVTSSADAVVARHPVPPPAGMEVLEQPLKVVNTKHSGQQSLRFRDDGRVFATGGWDAMVRVYSGKTMKEVAVLKWHEVGCYAVAFASALKAPQAAGGVEERDGTVVRRAGEVSVRERRIAHAEAAHWLAAGSKDGKISLWDIF.

A disordered region spans residues 1–31 (MGITLPSHDRLPRAPCTPTSSARTMPETPHP). 6 WD repeats span residues 37–76 (GHKAQVHALAFVGNNDRLASGDAEGYVALWDLTIMRPTAV), 79–117 (PHDNAILGIQGWGADRIITHGRDHKLAVWKLATSDEANL), 197–238 (GQNG…GTWN), 245–286 (PHSQ…EVLE), 294–333 (TKHSGQQSLRFRDDGRVFATGGWDAMVRVYSGKTMKEVAV), and 370–404 (AGEVSVRERRIAHAEAAHWLAAGSKDGKISLWDIF).

Belongs to the WD repeat ASA1 family. Component of the ASTRA chromatin remodeling machinery complex.

The protein localises to the nucleus. Component of the ASTRA complex involved in chromatin remodeling. This Verticillium alfalfae (strain VaMs.102 / ATCC MYA-4576 / FGSC 10136) (Verticillium wilt of alfalfa) protein is ASTRA-associated protein 1 (asa1).